The primary structure comprises 166 residues: NADH-quinone oxidoreductase subunit A (166 aa).

Transmembrane regions (helical) follow at residues 16–36 (FAVF…GAYF), 68–88 (FYLV…LYAW), and 98–118 (IGFI…FYLV). The tract at residues 141–166 (RYASSHPQDISQELSVAGSQQANESR) is disordered.

Belongs to the complex I subunit 3 family. As to quaternary structure, NDH-1 is composed of 13 different subunits. Subunits NuoA, H, J, K, L, M, N constitute the membrane sector of the complex.

It localises to the cell inner membrane. It catalyses the reaction a quinone + NADH + 5 H(+)(in) = a quinol + NAD(+) + 4 H(+)(out). NDH-1 shuttles electrons from NADH, via FMN and iron-sulfur (Fe-S) centers, to quinones in the respiratory chain. The immediate electron acceptor for the enzyme in this species is believed to be ubiquinone. Couples the redox reaction to proton translocation (for every two electrons transferred, four hydrogen ions are translocated across the cytoplasmic membrane), and thus conserves the redox energy in a proton gradient. The sequence is that of NADH-quinone oxidoreductase subunit A from Yersinia pseudotuberculosis serotype O:1b (strain IP 31758).